The sequence spans 481 residues: 7-deoxyloganetin glucosyltransferase (481 aa).

Residue His-22 is the Proton acceptor of the active site. Position 22 (His-22) interacts with an anthocyanidin. The Charge relay role is filled by Asp-126. Residues Thr-148, Gln-363, His-378, Trp-381, Asn-382, Ser-383, and Glu-386 each coordinate UDP-alpha-D-glucose. An anthocyanidin is bound at residue Ala-401. The UDP-alpha-D-glucose site is built by Glu-402 and Gln-403.

This sequence belongs to the UDP-glycosyltransferase family. Ubiquitous. Very low expression in stems.

The enzyme catalyses 7-deoxyloganetin + UDP-alpha-D-glucose = 7-deoxyloganin + UDP + H(+). Functionally, iridoid glucosyltransferase acting on genipin and 7-deoxyloganetin. No activity with 7-deoxyloganetic acid. Involved in geniposide biosynthesis. In Gardenia jasminoides (Cape jasmine), this protein is 7-deoxyloganetin glucosyltransferase (UGT85A24).